The sequence spans 358 residues: NADH-quinone oxidoreductase subunit H (358 aa).

The next 8 membrane-spanning stretches (helical) occupy residues 30–50 (VVIG…LIYM), 96–116 (FLYN…FSCL), 129–149 (VGVF…LLAG), 168–188 (IISY…LMGT), 201–221 (GWFI…YLIA), 265–285 (FIVA…LHIV), 297–317 (IPGF…LMWI), and 336–356 (YLVP…VFGL).

The protein belongs to the complex I subunit 1 family. As to quaternary structure, NDH-1 is composed of 14 different subunits. Subunits NuoA, H, J, K, L, M, N constitute the membrane sector of the complex.

The protein resides in the cell inner membrane. It carries out the reaction a quinone + NADH + 5 H(+)(in) = a quinol + NAD(+) + 4 H(+)(out). NDH-1 shuttles electrons from NADH, via FMN and iron-sulfur (Fe-S) centers, to quinones in the respiratory chain. The immediate electron acceptor for the enzyme in this species is believed to be ubiquinone. Couples the redox reaction to proton translocation (for every two electrons transferred, four hydrogen ions are translocated across the cytoplasmic membrane), and thus conserves the redox energy in a proton gradient. This subunit may bind ubiquinone. In Bacteroides fragilis (strain ATCC 25285 / DSM 2151 / CCUG 4856 / JCM 11019 / LMG 10263 / NCTC 9343 / Onslow / VPI 2553 / EN-2), this protein is NADH-quinone oxidoreductase subunit H.